We begin with the raw amino-acid sequence, 261 residues long: Putative hydro-lyase SSP0308 (261 aa).

The protein belongs to the D-glutamate cyclase family.

This chain is Putative hydro-lyase SSP0308, found in Staphylococcus saprophyticus subsp. saprophyticus (strain ATCC 15305 / DSM 20229 / NCIMB 8711 / NCTC 7292 / S-41).